A 412-amino-acid polypeptide reads, in one-letter code: CCA-adding enzyme (412 aa).

ATP contacts are provided by S41 and K44. Residues S41 and K44 each contribute to the CTP site. Mg(2+)-binding residues include D53, D55, and D106. Residues H129, K149, and Y158 each coordinate ATP. CTP is bound by residues H129, K149, and Y158.

Belongs to the tRNA nucleotidyltransferase/poly(A) polymerase family. Archaeal CCA-adding enzyme subfamily. Homodimer. Mg(2+) serves as cofactor.

It carries out the reaction a tRNA precursor + 2 CTP + ATP = a tRNA with a 3' CCA end + 3 diphosphate. The catalysed reaction is a tRNA with a 3' CCA end + 2 CTP + ATP = a tRNA with a 3' CCACCA end + 3 diphosphate. In terms of biological role, catalyzes the addition and repair of the essential 3'-terminal CCA sequence in tRNAs without using a nucleic acid template. Adds these three nucleotides in the order of C, C, and A to the tRNA nucleotide-73, using CTP and ATP as substrates and producing inorganic pyrophosphate. tRNA 3'-terminal CCA addition is required both for tRNA processing and repair. Also involved in tRNA surveillance by mediating tandem CCA addition to generate a CCACCA at the 3' terminus of unstable tRNAs. While stable tRNAs receive only 3'-terminal CCA, unstable tRNAs are marked with CCACCA and rapidly degraded. This chain is CCA-adding enzyme, found in Saccharolobus islandicus (strain Y.G.57.14 / Yellowstone #1) (Sulfolobus islandicus).